Reading from the N-terminus, the 318-residue chain is Endochitinase 3 (318 aa).

Positions 1–18 (EFTIFSLLFSLLLLNASA) are cleaved as a signal peptide. The Chitin-binding type-1 domain occupies 19 to 60 (EQCGSQAGGALCAPGLCCSKFGWCGNTNDYCGPGNCQSQCPG). Disulfide bonds link cysteine 21–cysteine 36, cysteine 30–cysteine 42, cysteine 35–cysteine 49, cysteine 54–cysteine 58, cysteine 89–cysteine 152, cysteine 164–cysteine 172, and cysteine 271–cysteine 303. The active-site Proton donor is glutamate 134. The propeptide at 312–318 (GLLVDTV) is removed in mature form, vacuolar targeting.

Belongs to the glycosyl hydrolase 19 family. Chitinase class I subfamily.

Its subcellular location is the vacuole. It carries out the reaction Random endo-hydrolysis of N-acetyl-beta-D-glucosaminide (1-&gt;4)-beta-linkages in chitin and chitodextrins.. Functionally, defense against chitin-containing fungal pathogens. The sequence is that of Endochitinase 3 (CHTB3) from Solanum tuberosum (Potato).